Consider the following 239-residue polypeptide: 1-(5-phosphoribosyl)-5-[(5-phosphoribosylamino)methylideneamino] imidazole-4-carboxamide isomerase (239 aa).

Residue D8 is the Proton acceptor of the active site. Residue D130 is the Proton donor of the active site.

Belongs to the HisA/HisF family.

The protein resides in the cytoplasm. The catalysed reaction is 1-(5-phospho-beta-D-ribosyl)-5-[(5-phospho-beta-D-ribosylamino)methylideneamino]imidazole-4-carboxamide = 5-[(5-phospho-1-deoxy-D-ribulos-1-ylimino)methylamino]-1-(5-phospho-beta-D-ribosyl)imidazole-4-carboxamide. It participates in amino-acid biosynthesis; L-histidine biosynthesis; L-histidine from 5-phospho-alpha-D-ribose 1-diphosphate: step 4/9. This Lachnoclostridium phytofermentans (strain ATCC 700394 / DSM 18823 / ISDg) (Clostridium phytofermentans) protein is 1-(5-phosphoribosyl)-5-[(5-phosphoribosylamino)methylideneamino] imidazole-4-carboxamide isomerase.